Here is a 227-residue protein sequence, read N- to C-terminus: ATP synthase F(0) complex subunit a (227 aa).

The next 6 helical transmembrane spans lie at 14 to 34 (FLGIPMILMALALPWLLIPTP), 73 to 93 (LASLMMFLLTLNMLGLMPYIF), 98 to 118 (QLSLNLGLAVPLWLATVLIGM), 137 to 157 (ALIPILIIMQTISLFIRPLAL), 179 to 199 (VFVLMPMMPVVAILTAVLLLL), and 203 to 223 (LEVAVAMIQAYVFILLLSLYL).

Belongs to the ATPase A chain family. As to quaternary structure, component of the ATP synthase complex composed at least of ATP5F1A/subunit alpha, ATP5F1B/subunit beta, ATP5MC1/subunit c (homooctomer), MT-ATP6/subunit a, MT-ATP8/subunit 8, ATP5ME/subunit e, ATP5MF/subunit f, ATP5MG/subunit g, ATP5MK/subunit k, ATP5MJ/subunit j, ATP5F1C/subunit gamma, ATP5F1D/subunit delta, ATP5F1E/subunit epsilon, ATP5PF/subunit F6, ATP5PB/subunit b, ATP5PD/subunit d, ATP5PO/subunit OSCP. ATP synthase complex consists of a soluble F(1) head domain (subunits alpha(3) and beta(3)) - the catalytic core - and a membrane F(0) domain - the membrane proton channel (subunits c, a, 8, e, f, g, k and j). These two domains are linked by a central stalk (subunits gamma, delta, and epsilon) rotating inside the F1 region and a stationary peripheral stalk (subunits F6, b, d, and OSCP). Interacts with DNAJC30; interaction is direct.

The protein localises to the mitochondrion inner membrane. The enzyme catalyses H(+)(in) = H(+)(out). Subunit a, of the mitochondrial membrane ATP synthase complex (F(1)F(0) ATP synthase or Complex V) that produces ATP from ADP in the presence of a proton gradient across the membrane which is generated by electron transport complexes of the respiratory chain. ATP synthase complex consist of a soluble F(1) head domain - the catalytic core - and a membrane F(1) domain - the membrane proton channel. These two domains are linked by a central stalk rotating inside the F(1) region and a stationary peripheral stalk. During catalysis, ATP synthesis in the catalytic domain of F(1) is coupled via a rotary mechanism of the central stalk subunits to proton translocation. With the subunit c (ATP5MC1), forms the proton-conducting channel in the F(0) domain, that contains two crucial half-channels (inlet and outlet) that facilitate proton movement from the mitochondrial intermembrane space (IMS) into the matrix. Protons are taken up via the inlet half-channel and released through the outlet half-channel, following a Grotthuss mechanism. In Gadus morhua (Atlantic cod), this protein is ATP synthase F(0) complex subunit a.